The following is a 516-amino-acid chain: Endo-acting ulvan lyase (516 aa).

The signal sequence occupies residues 1-24; sequence MLEKTTLKNIILIHFLMFLAVVTA. Residues C38 and C65 are joined by a disulfide bond. Ca(2+) is bound by residues G42, N44, D62, S64, A67, and N68. Position 138 (Y138) interacts with substrate. Residue K143 is the Proton acceptor of the active site. Residues 191-195 and 260-263 each bind substrate; these read EGDGR and YRVK. Catalysis depends on Y260, which acts as the Proton donor/acceptor. The tract at residues 289-429 is ulvan-binding domain; that stretch reads PIGDVYKLKN…VWKAIAVESL (141 aa). Positions 430–516 are cleaved as a propeptide — removed by the type IX secretion system (T9SS); it reads SVDENAILAS…NKYHKKLIVK (87 aa).

Belongs to the polysaccharide lyase 28 family. Requires Ca(2+) as cofactor.

The protein localises to the secreted. Its function is as follows. Ulvan lyase involved in ulvan degradation. Ulvan is the main polysaccharide component of the Ulvales (green seaweed) cell wall. It is composed of disaccharide building blocks comprising 3-sulfated rhamnose (Rha3S) linked to D-glucuronic acid (GlcA), L-iduronic acid (IduA), or D-xylose (Xyl). Ulvan lyase catalyzes the endolytic cleavage of the glycosidic bond between Rha3S and the uronic acids GlcA or IduA, producing oligosaccharides that have unsaturated 4-deoxy-L-threo-hex-4-enopyranosiduronic acid (deltaUA) at the non-reducing end. This results eventually in the degradation of the ulvan polysaccharide into deltaUA-Rha3S disaccharides and deltaUA-Rha3S-Xyl-Rha3S tetrasaccharides. In Formosa agariphila (strain DSM 15362 / KCTC 12365 / LMG 23005 / KMM 3901 / M-2Alg 35-1), this protein is Endo-acting ulvan lyase.